A 321-amino-acid polypeptide reads, in one-letter code: Iron(3+)-hydroxamate-binding protein YxeB (321 aa).

The N-terminal stretch at 1–20 (MKKNILLVGMLVLLLMFVSA) is a signal peptide. C21 carries N-palmitoyl cysteine lipidation. The S-diacylglycerol cysteine moiety is linked to residue C21. Positions 24-33 (TASKGSSSDS) are enriched in low complexity. A disordered region spans residues 24 to 48 (TASKGSSSDSASEKTEMRTYKSPKG). The Fe/B12 periplasmic-binding domain maps to 58–316 (RIVTDFYAGE…IITDMLIKRA (259 aa)).

Belongs to the bacterial solute-binding protein 8 family. As to quaternary structure, the complex is composed of an ATP-binding protein (FhuC), two transmembrane proteins (FhuB and FhuG) and a solute-binding protein (FhuD or YxeB).

It localises to the cell membrane. The protein localises to the membrane raft. In terms of biological role, part of the ABC transporter complex FhuCBGD involved in iron(3+)-hydroxamate import. Binds the iron(3+)-hydroxamate complex and transfers it to the membrane-bound permease. Partially required for the transport of desferrioxamine. The sequence is that of Iron(3+)-hydroxamate-binding protein YxeB (yxeB) from Bacillus subtilis (strain 168).